The following is a 474-amino-acid chain: ATP synthase subunit beta 2 (474 aa).

156 to 163 (GGAGVGKT) is a binding site for ATP.

It belongs to the ATPase alpha/beta chains family. In terms of assembly, F-type ATPases have 2 components, CF(1) - the catalytic core - and CF(0) - the membrane proton channel. CF(1) has five subunits: alpha(3), beta(3), gamma(1), delta(1), epsilon(1). CF(0) has three main subunits: a(1), b(2) and c(9-12). The alpha and beta chains form an alternating ring which encloses part of the gamma chain. CF(1) is attached to CF(0) by a central stalk formed by the gamma and epsilon chains, while a peripheral stalk is formed by the delta and b chains.

The protein resides in the cell inner membrane. It catalyses the reaction ATP + H2O + 4 H(+)(in) = ADP + phosphate + 5 H(+)(out). In terms of biological role, produces ATP from ADP in the presence of a proton gradient across the membrane. The catalytic sites are hosted primarily by the beta subunits. The sequence is that of ATP synthase subunit beta 2 from Shewanella frigidimarina (strain NCIMB 400).